Consider the following 2549-residue polypeptide: Serine/threonine-protein kinase mTOR (2549 aa).

Met1 is modified (N-acetylmethionine). The segment at 1-651 (MLGTGPAAAT…HVVSQTAVQV (651 aa)) is interaction with NBN. 32 HEAT repeats span residues 16-53 (SSNVSVLQQFASGLKSRNEETRAKAAKELQHYVTMELR), 55-99 (MSQE…VEGG), 100-137 (NATRIGRFANYLRNLLPSNDPVVMEMASKAIGRLAMAG), 138-179 (DTFT…AISV), 180-220 (PTFF…LILT), 222-276 (QREP…RISS), 277-313 (MEGERLREEMEEITQQQLVHDKYCKDLMGFGTKPRHI), 314-364 (TPFT…CCRD), 365-409 (LMEE…AFTD), 410-445 (TQYLQDTMNHVLSCVKKEKERTAAFQALGLLSVAVR), 446-494 (SEFK…RAMG), 495-529 (PGIQQDIKELLEPMLAVGLSPALTAVLYDLSRQIP), 530-563 (QLKKDIQDGLLKMLSLVLMHKPLRHPGMPKGLAH), 564-596 (QLASPGLTTLPEASDVGSITLALRTLGSFEFEG), 597-636 (HSLTQFVRHCADHFLNSEHKEIRMEAARTCSRLLTPSIHL), 637-683 (ISGH…DERF), 686-724 (HLAQAENLQALFVALNDQVFEIRELAICTVGRLSSMNPA), 727-766 (MPFLRKMLIQILTELEHSGIGRIKEQSARMLGHLVSNAPR), 769-811 (RPYM…VSGL), 814-853 (RKWVDELFIIIMDMLQDSSLLAKRQVALWTLGQLVASTGY), 857-893 (PYRKYPTLLEVLLNFLKTEQNQGTRREAIRVLGLLGA), 894-942 (LDPY…GNLP), 943-988 (LDEF…KCVQ), 989-1027 (FLPQVMPTFLNVIRVCDGAIREFLFQQLGMLVSFVKSHI), 1029-1068 (PYMDEIVTLMREFWVMNTSIQSTIILLIEQIVVALGGEFK), 1069-1105 (LYLPQLIPHMLRVFMHDNSPGRIVSIKLLAAIQLFGA), 1106-1144 (NLDDYLHLLLPPIVKLFDAPEAPLPSRKAALETVDRLTE), 1145-1188 (SLDF…GKKY), 1189-1225 (QIFIPMVNKVLVRHRINHQRYDVLICRIVKGYTLADE), 1226-1273 (EEDP…GAAR), 1274-1311 (RVSKDDWLEWLRRLSLELLKDSSSPSLRSCWALAQAYN), and 1312-1345 (PMARDLFNAAFVSCWSELNEDQQDELIRSIELAL). Ser567 carries the phosphoserine modification. Thr1162 bears the Phosphothreonine mark. Residue Lys1218 is modified to N6-acetyllysine. Phosphoserine is present on Ser1261. TPR repeat units lie at residues 1346–1382 (TSQDIAEVTQTLLNLAEFMEHSDKGPLPLRDDNGIVL), 1383–1408 (LGERAAKCRAYAKALHYKELEFQKGP), 1409–1442 (TPAILESLISINNKLQQPEAAAGVLEYAMKHFGE), 1443–1473 (LEIQATWYEKLHEWEDALVAYDKKMDTNKDD), 1474–1507 (PELMLGRMRCLEALGEWGQLHQQCCEKWTLVNDE), 1508–1541 (TQAKMARMAAAAAWGLGQWDSMEEYTCMIPRDTH), 1542–1574 (DGAFYRAVLALHQDLFSLAQQCIDKARDLLDAE), 1575–1614 (LTAMAGESYSRAYGAMVSCHMLSELEEVIQYKLVPERREI), 1615–1649 (IRQIWWERLQGCQRIVEDWQKILMVRSLVVSPHED), 1650–1693 (MRTW…PTVH), 1694–1731 (PQVTYAYMKNMWKSARKIDAFQHMQHFVQTMQQQAQHA), 1732–1786 (IATE…DRSW), 1787–1846 (YKAW…STEG), 1898–1930 (NNLQDTLRVLTLWFDYGHWPDVNEALVEGVKAI), 1931–1970 (QIDTWLQVIPQLIARIDTPRPLVGRLIHQLLTDIGRYHPQ), and 1971–2005 (ALIYPLTVASKSTTTARHNAANKILKNMCEHSNTL). Positions 1382–1982 (LLGERAAKCR…IYPLTVASKS (601 aa)) constitute an FAT domain. Lys1662, Lys1702, and Arg1749 together coordinate 1D-myo-inositol hexakisphosphate. The disordered stretch occupies residues 1812–1867 (DEKKKLRHASGANITNATTAATTAATATTTASTEGSNSESEAESTENSPTPSPLQK). The span at 1820-1860 (ASGANITNATTAATTAATATTTASTEGSNSESEAESTENSP) shows a compositional bias: low complexity. Positions 2012-2144 (VSEELIRVAI…DLELAVPGTY (133 aa)) are sufficient for interaction with the FKBP1A/rapamycin complex. Lys2066 participates in a covalent cross-link: Glycyl lysine isopeptide (Lys-Gly) (interchain with G-Cter in ubiquitin). Residues 2156–2469 (IAPSLQVITS…GVELGEPAHK (314 aa)) enclose the PI3K/PI4K catalytic domain. The residue at position 2159 (Ser2159) is a Phosphoserine; by TBK1. The segment at 2162–2168 (VITSKQR) is G-loop. Thr2164 carries the phosphothreonine modification. Residues Ser2165 and Gln2167 each coordinate ATP. Thr2173 carries the post-translational modification Phosphothreonine; by PKB/AKT1. Residues Leu2185, Lys2187, Glu2190, Tyr2225, Gly2238, Trp2239, Val2240, and Thr2245 each coordinate ATP. An interaction with MLST8 region spans residues 2258 to 2296 (KILLNIEHRIMLRMAPDYDHLTLMQKVEVFEHAVNNTAG). Positions 2335-2343 (GLGDRHPSN) are catalytic loop. Mg(2+) is bound at residue Asn2343. Positions 2345 and 2356 each coordinate ATP. The tract at residues 2355–2380 (HIDFGDCFEVAMTREKFPEKIPFRLT) is activation loop. Asp2357 is a Mg(2+) binding site. Phosphothreonine; by RPS6KB1 is present on Thr2446. A Phosphoserine; by RPS6KB1 modification is found at Ser2448. Ser2478 carries the phosphoserine modification. Residue Ser2481 is modified to Phosphoserine; by autocatalysis. Positions 2517–2549 (DTLDVPTQVELLIKQATSHENLCQCYIGWCPFW) constitute an FATC domain.

It belongs to the PI3/PI4-kinase family. Part of the mechanistic target of rapamycin complex 1 (mTORC1) which contains MTOR, MLST8 and RPTOR. The mTORC1 complex is a 1 Md obligate dimer of two stoichiometric heterotetramers with overall dimensions of 290 A x 210 A x 135 A. It has a rhomboid shape and a central cavity, the dimeric interfaces are formed by interlocking interactions between the two MTOR and the two RPTOR subunits. The MLST8 subunit forms distal foot-like protuberances, and contacts only one MTOR within the complex, while the small AKT1S1/PRAS40 localizes to the midsection of the central core, in close proximity to RPTOR. mTORC1 associates with AKT1S1/PRAS40, which inhibits its activity by blocking MTOR substrate-recruitment site. Component of the mechanistic target of rapamycin complex 2 (mTORC2), consisting in two heterotretramers composed of MTOR, MLST8, RICTOR and MAPKAP1/SIN1. Interacts with PLPP7 and PML. Interacts with PRR5 and RICTOR; the interaction is direct within the mTORC2 complex and interaction with RICTOR is enhanced by deubiquitination of RICTOR by USP9X. mTORC1 and mTORC2 associate with DEPTOR, which regulates their activity. Interacts with WAC; WAC positively regulates MTOR activity by promoting the assembly of the TTT complex composed of TELO2, TTI1 and TTI2 and the RUVBL complex composed of RUVBL1 and RUVBL2 into the TTT-RUVBL complex which leads to the dimerization of the mTORC1 complex and its subsequent activation. Interacts with UBQLN1. Interacts with TTI1 and TELO2. Interacts with CLIP1; phosphorylates and regulates CLIP1. Interacts with NBN. Interacts with HTR6. Interacts with BRAT1. Interacts with MEAK7 (via C-terminal domain); the interaction increases upon nutrient stimulation. Interacts with TM4SF5; the interaction is positively regulated by arginine and is negatively regulated by leucine. Interacts with GPR137B. Interacts with NCKAP1L. Interacts with TPCN1 and TPCN2; the interaction is required for TPCN1 and TPCN2 sensitivity to ATP. Interacts with ATP6V1A and with CRYAB, forming a ternary complex. Interacts with SLC38A7; this interaction mediates the recruitment of mTORC1 to the lysosome and its subsequent activation. Interacts with TSPAN8. Autophosphorylates when part of mTORC1 or mTORC2. Phosphorylation at Ser-1261, Ser-2159 and Thr-2164 promotes autophosphorylation. Phosphorylated at Ser-2448 by RPS6KB1. Phosphorylation in the kinase domain modulates the interactions of MTOR with RPTOR and AKT1S1/PRAS40 and leads to increased intrinsic mTORC1 kinase activity. Phosphorylation at Ser-2159 by TBK1 in response to growth factors and pathogen recognition receptors promotes mTORC1 activity. Phosphorylation at Ser-2159 by TBK1 in response to EGF growth factor promotes mTORC2 activity, leading to AKT1 phosphorylation and activation. Phosphorylation at Thr-2173 in the ATP-binding region by AKT1 strongly reduces kinase activity. Post-translationally, ubiquitinated at Lys-2066 by the SCF(FBXO22) complex via 'Lys-27'-linked ubiquitination prevents mTORC1 substrate recruitment. In terms of tissue distribution, expressed in numerous tissues, with highest levels in testis.

It is found in the lysosome membrane. The protein localises to the endoplasmic reticulum membrane. It localises to the golgi apparatus membrane. The protein resides in the cell membrane. Its subcellular location is the mitochondrion outer membrane. It is found in the cytoplasm. The protein localises to the nucleus. It localises to the PML body. The protein resides in the microsome membrane. Its subcellular location is the cytoplasmic vesicle. It is found in the phagosome. It carries out the reaction L-seryl-[protein] + ATP = O-phospho-L-seryl-[protein] + ADP + H(+). The enzyme catalyses L-threonyl-[protein] + ATP = O-phospho-L-threonyl-[protein] + ADP + H(+). The catalysed reaction is L-tyrosyl-[protein] + ATP = O-phospho-L-tyrosyl-[protein] + ADP + H(+). The mTORC1 complex is activated in response to nutrients, growth factors or amino acids: activation requires relocalization of the mTORC1 complex to lysosomes that is mediated by the Ragulator complex, SLC38A9, and the Rag GTPases RagA/RRAGA, RagB/RRAGB, RagC/RRAGC and RagD/RRAGD. Activation of mTORC1 by growth factors such as insulin involves AKT1-mediated phosphorylation of TSC1-TSC2, which leads to the activation of the RHEB GTPase a potent activator of the protein kinase activity of mTORC1. Insulin-stimulated and amino acid-dependent phosphorylation at Ser-1261 promotes autophosphorylation and the activation of mTORC1. On the other hand, low cellular energy levels can inhibit mTORC1 through activation of PRKAA1 while hypoxia inhibits mTORC1 through a REDD1-dependent mechanism which may also require PRKAA1. The kinase activity of MTOR within the mTORC1 complex is positively regulated by MLST8. The kinase activity of MTOR is inhibited by DEPTOR and AKT1S1. The non-canonical mTORC1 complex is independent of the RHEB GTPase and specifically mediates phosphorylation of MiT/TFE factors TFEB and TFE3 but not other mTORC1 substrates: it is activated by FLCN, which activates Rag GTPases RagC/RRAGC and RagD/RRAGD. MTOR is the target of the immunosuppressive and anti-cancer drug rapamycin which acts in complex with FKBP1A/FKBP12, and specifically inhibits its kinase activity. mTORC2 is also activated by growth factors, but seems to be nutrient-insensitive. mTORC2 associates and is directly activated by ribosomes. mTORC2 may also be regulated by RHEB but in an indirect manner through the PI3K signaling pathway. In terms of biological role, serine/threonine protein kinase which is a central regulator of cellular metabolism, growth and survival in response to hormones, growth factors, nutrients, energy and stress signals. MTOR directly or indirectly regulates the phosphorylation of at least 800 proteins. Functions as part of 2 structurally and functionally distinct signaling complexes mTORC1 and mTORC2 (mTOR complex 1 and 2). In response to nutrients, growth factors or amino acids, mTORC1 is recruited to the lysosome membrane and promotes protein, lipid and nucleotide synthesis by phosphorylating key regulators of mRNA translation and ribosome synthesis. This includes phosphorylation of EIF4EBP1 and release of its inhibition toward the elongation initiation factor 4E (eiF4E). Moreover, phosphorylates and activates RPS6KB1 and RPS6KB2 that promote protein synthesis by modulating the activity of their downstream targets including ribosomal protein S6, eukaryotic translation initiation factor EIF4B, and the inhibitor of translation initiation PDCD4. Stimulates the pyrimidine biosynthesis pathway, both by acute regulation through RPS6KB1-mediated phosphorylation of the biosynthetic enzyme CAD, and delayed regulation, through transcriptional enhancement of the pentose phosphate pathway which produces 5-phosphoribosyl-1-pyrophosphate (PRPP), an allosteric activator of CAD at a later step in synthesis, this function is dependent on the mTORC1 complex. Regulates ribosome synthesis by activating RNA polymerase III-dependent transcription through phosphorylation and inhibition of MAF1 an RNA polymerase III-repressor. Activates dormant ribosomes by mediating phosphorylation of SERBP1, leading to SERBP1 inactivation and reactivation of translation. In parallel to protein synthesis, also regulates lipid synthesis through SREBF1/SREBP1 and LPIN1. To maintain energy homeostasis mTORC1 may also regulate mitochondrial biogenesis through regulation of PPARGC1A. In the same time, mTORC1 inhibits catabolic pathways: negatively regulates autophagy through phosphorylation of ULK1. Under nutrient sufficiency, phosphorylates ULK1 at 'Ser-758', disrupting the interaction with AMPK and preventing activation of ULK1. Also prevents autophagy through phosphorylation of the autophagy inhibitor DAP. Also prevents autophagy by phosphorylating RUBCNL/Pacer under nutrient-rich conditions. Prevents autophagy by mediating phosphorylation of AMBRA1, thereby inhibiting AMBRA1 ability to mediate ubiquitination of ULK1 and interaction between AMBRA1 and PPP2CA. mTORC1 exerts a feedback control on upstream growth factor signaling that includes phosphorylation and activation of GRB10 a INSR-dependent signaling suppressor. Among other potential targets mTORC1 may phosphorylate CLIP1 and regulate microtubules. The mTORC1 complex is inhibited in response to starvation and amino acid depletion. The non-canonical mTORC1 complex, which acts independently of RHEB, specifically mediates phosphorylation of MiT/TFE factors MITF, TFEB and TFE3 in the presence of nutrients, promoting their cytosolic retention and inactivation. Upon starvation or lysosomal stress, inhibition of mTORC1 induces dephosphorylation and nuclear translocation of TFEB and TFE3, promoting their transcription factor activity. The mTORC1 complex regulates pyroptosis in macrophages by promoting GSDMD oligomerization. MTOR phosphorylates RPTOR which in turn inhibits mTORC1. As part of the mTORC2 complex, MTOR transduces signals from growth factors to pathways involved in proliferation, cytoskeletal organization, lipogenesis and anabolic output. In response to growth factors, mTORC2 phosphorylates and activates AGC protein kinase family members, including AKT (AKT1, AKT2 and AKT3), PKC (PRKCA, PRKCB and PRKCE) and SGK1. In contrast to mTORC1, mTORC2 is nutrient-insensitive. mTORC2 plays a critical role in AKT1 activation by mediating phosphorylation of different sites depending on the context, such as 'Thr-450', 'Ser-473', 'Ser-477' or 'Thr-479', facilitating the phosphorylation of the activation loop of AKT1 on 'Thr-308' by PDPK1/PDK1 which is a prerequisite for full activation. mTORC2 also regulates the phosphorylation of SGK1 at 'Ser-422'. mTORC2 may regulate the actin cytoskeleton, through phosphorylation of PRKCA, PXN and activation of the Rho-type guanine nucleotide exchange factors RHOA and RAC1A or RAC1B. The mTORC2 complex also phosphorylates various proteins involved in insulin signaling, such as FBXW8 and IGF2BP1. May also regulate insulin signaling by acting as a tyrosine protein kinase that catalyzes phosphorylation of IGF1R and INSR; additional evidence are however required to confirm this result in vivo. Regulates osteoclastogenesis by adjusting the expression of CEBPB isoforms. Plays an important regulatory role in the circadian clock function; regulates period length and rhythm amplitude of the suprachiasmatic nucleus (SCN) and liver clocks. The protein is Serine/threonine-protein kinase mTOR of Homo sapiens (Human).